The sequence spans 733 residues: MNKIWRELGLTDEEYEKIISILGREPNITELGMYSVMWSEHCSYKNSKPLLKYLPTKGERVIQGPGENAGVLDIGDNLAVVMKIESHNHPSAIEPYQGAATGVGGIIRDIFTMGARPIALLDSLRFGIPDDKRTKYLIENVVAGIADYGNCIGIPTVGGDTYFEESYKGNPLVNAMCVGIVEKDKIKKGIAKGIGNPVMVVGATTGRDGIGGASFASQELSEESEEKRPSVQVGDPFMEKLLLEACLELFETDAVVAIQDMGAAGLTSSSCEMASRGGVGMEIDLDKVPLREEGMTPYEIMLSESQERMLVVVKKGKEEDVQKIFKKWGLNAATIGKITDDGMIRVIKDGKIVAEVPAKSLTEDAPQYVREEEVPKWQEEVKKLDINEVKPPEDMNKVLKDVISSLNIASKEWIYSQYDYMVRTDTVITPGMDAAVVRIKGTRKAIALTTDCNGRYCYLDPYIGSQIAVAEAARNLCMVGAKPIGVTDCLNFGNPEKKEIYWQLKNSIFGIAKACETFQIPVVSGNVSLYNENEGEAIYPTPVIGMAGLIEDVSKICTMDFKKERDVIIILGENKGEIGGSEYLKVCFGMVKGQPPQIDLEKEKRLQELVLKLIDEGLINSSHDISEGGFAAALVESAIAGKKGAKISLQTSLRADIELFSESQSRALITVSPEKVDEVLKIAYEHQVPAQKVGVVEGKDIVIDVNGKRIIDLPLEVLEESWRGRIKWEMERN.

His41 is an active-site residue. The ATP site is built by Tyr44 and Lys83. Residue Glu85 coordinates Mg(2+). Residues 86–89 (SHNH) and Arg108 contribute to the substrate site. His87 serves as the catalytic Proton acceptor. Residue Asp109 participates in Mg(2+) binding. The segment at 212–232 (GASFASQELSEESEEKRPSVQ) is disordered. Gln232 serves as a coordination point for substrate. Residue Asp260 coordinates Mg(2+). 304–306 (ESQ) is a substrate binding site. Residues Asp488 and Gly525 each contribute to the ATP site. Asn526 provides a ligand contact to Mg(2+). Ser528 contacts substrate.

The protein belongs to the FGAMS family. In terms of assembly, monomer. Part of the FGAM synthase complex composed of 1 PurL, 1 PurQ and 2 PurS subunits.

It is found in the cytoplasm. The catalysed reaction is N(2)-formyl-N(1)-(5-phospho-beta-D-ribosyl)glycinamide + L-glutamine + ATP + H2O = 2-formamido-N(1)-(5-O-phospho-beta-D-ribosyl)acetamidine + L-glutamate + ADP + phosphate + H(+). Its pathway is purine metabolism; IMP biosynthesis via de novo pathway; 5-amino-1-(5-phospho-D-ribosyl)imidazole from N(2)-formyl-N(1)-(5-phospho-D-ribosyl)glycinamide: step 1/2. Its function is as follows. Part of the phosphoribosylformylglycinamidine synthase complex involved in the purines biosynthetic pathway. Catalyzes the ATP-dependent conversion of formylglycinamide ribonucleotide (FGAR) and glutamine to yield formylglycinamidine ribonucleotide (FGAM) and glutamate. The FGAM synthase complex is composed of three subunits. PurQ produces an ammonia molecule by converting glutamine to glutamate. PurL transfers the ammonia molecule to FGAR to form FGAM in an ATP-dependent manner. PurS interacts with PurQ and PurL and is thought to assist in the transfer of the ammonia molecule from PurQ to PurL. The chain is Phosphoribosylformylglycinamidine synthase subunit PurL from Caldanaerobacter subterraneus subsp. tengcongensis (strain DSM 15242 / JCM 11007 / NBRC 100824 / MB4) (Thermoanaerobacter tengcongensis).